Consider the following 311-residue polypeptide: Porphobilinogen deaminase (311 aa).

At cysteine 241 the chain carries S-(dipyrrolylmethanemethyl)cysteine.

The protein belongs to the HMBS family. In terms of assembly, monomer. Dipyrromethane is required as a cofactor.

It carries out the reaction 4 porphobilinogen + H2O = hydroxymethylbilane + 4 NH4(+). It participates in porphyrin-containing compound metabolism; protoporphyrin-IX biosynthesis; coproporphyrinogen-III from 5-aminolevulinate: step 2/4. In terms of biological role, tetrapolymerization of the monopyrrole PBG into the hydroxymethylbilane pre-uroporphyrinogen in several discrete steps. This chain is Porphobilinogen deaminase, found in Carboxydothermus hydrogenoformans (strain ATCC BAA-161 / DSM 6008 / Z-2901).